The following is a 796-amino-acid chain: MIGINKMIIQRTELYTTTGVVKSTIHGNIINISFNRNIQYQYRQISNKNKNRNLSPRVLNLKEKGTARVTKLNKNRKKGMRVVQKKDILNAKLNVQTPIVVEEIKNISFASQMVHKEHDNLPTLRSKQRMLLKAYFDQLRINNLKAVNNIFTLKKRVLNLKSNYLIVTYSPKGTKVNKANVLQQLLKYKQYFTKKWAFKLKARVTKTNFIKTQIALEKQKVRNIAQPCYISLNQKINKKLQKLQKQKLVLTSKAKLQRFKKQRYLFLKSQSKLDIDLLLIELKKKARQSKIKYKRRTKKKVKSVKVIEELKDFVALEEEMEAYYKTPVETIMSSIVTKYTENAKPLILKNLQQKLRVKEYLQYSQIRRLIDITNEKELYKNKELSKRNEKKLKKSIQQKFLKTVVIAVNHKKNQQKDSKKELIIKVLLNILRRKGEVPFEGKIDMVLPYLKELGRKQDDAKMNNLALNLQMRIVTDLLNYKGDTEVKNNHVALVRKRIDYLNYMSQNPRRSRNAGPRSDYKVIGKAKYQGKMMYAKLTEQRKMLENVALKNNYNILNNIIESEKKLYKLRLPKQRVTVPTLYQIYERVINHIKGFERKTQGVYSKAKKFQNILTKLQAIKRNKKGTIKKRRLKKAQEETTAPVTIPLTQGVLRITLKKKNMFLVLQNLSTKHIDTTVTARQEYYRIYNPKEIDPLEKKKKQALKLTALKPLGPIGRVIGTDLFRRRVITQVLLNLKAQIKYNVLDIEIRKPGFHSIINTILYKLWYIYEDQGLLRMYKFTKNKAHGSMRKKKHRRL.

It localises to the mitochondrion. This is an uncharacterized protein from Dictyostelium discoideum (Social amoeba).